An 88-amino-acid chain; its full sequence is Small ribosomal subunit protein uS15 (88 aa).

It belongs to the universal ribosomal protein uS15 family. Part of the 30S ribosomal subunit. Forms a bridge to the 50S subunit in the 70S ribosome, contacting the 23S rRNA.

Functionally, one of the primary rRNA binding proteins, it binds directly to 16S rRNA where it helps nucleate assembly of the platform of the 30S subunit by binding and bridging several RNA helices of the 16S rRNA. In terms of biological role, forms an intersubunit bridge (bridge B4) with the 23S rRNA of the 50S subunit in the ribosome. The chain is Small ribosomal subunit protein uS15 from Mycoplasmopsis synoviae (strain 53) (Mycoplasma synoviae).